The chain runs to 381 residues: cAMP-dependent protein kinase type I-alpha regulatory subunit (381 aa).

Position 1 is an N-acetylmethionine (methionine 1). An N-acetylalanine; in cAMP-dependent protein kinase type I-alpha regulatory subunit, N-terminally processed modification is found at alanine 2. The segment at 2-136 (ASGSMATSEE…ALAKAIEKNV (135 aa)) is dimerization and phosphorylation. At serine 3 the chain carries Phosphoserine. The tract at residues 73-96 (IRTDSREDEISPPPPNPVVKGRRR) is disordered. Threonine 75 carries the phosphothreonine modification. 2 positions are modified to phosphoserine: serine 77 and serine 83. A Pseudophosphorylation motif motif is present at residues 96-100 (RRGAI). Serine 101 carries the post-translational modification Phosphoserine. 3',5'-cyclic AMP contacts are provided by residues 137-254 (LFSH…SKVS), glutamate 202, arginine 211, 255-381 (ILES…SLSV), glutamate 326, and arginine 335. Residue serine 258 is modified to Phosphoserine.

The protein belongs to the cAMP-dependent kinase regulatory chain family. In terms of assembly, the inactive holoenzyme is composed of two regulatory chains and two catalytic chains. Activation by cAMP releases the two active catalytic monomers and the regulatory dimer. Interacts with PRKACA and PRKACB. PRKAR1A also interacts with RFC2; the complex may be involved in cell survival. Interacts with AKAP4. Interacts with RARA; the interaction occurs in the presence of cAMP or FSH and regulates RARA transcriptional activity. Interacts with the phosphorylated form of PJA2. Interacts with PRKX; regulates this cAMP-dependent protein kinase. Interacts with CBFA2T3. Interacts with smAKAP; this interaction may target PRKAR1A to the plasma membrane. Interacts with AICDA. Post-translationally, the pseudophosphorylation site binds to the substrate-binding region of the catalytic chain, resulting in the inhibition of its activity.

The protein localises to the cell membrane. In terms of biological role, regulatory subunit of the cAMP-dependent protein kinases involved in cAMP signaling in cells. The chain is cAMP-dependent protein kinase type I-alpha regulatory subunit (Prkar1a) from Mus musculus (Mouse).